A 266-amino-acid polypeptide reads, in one-letter code: Glucosamine-6-phosphate deaminase (266 aa).

Asp-72 (proton acceptor; for enolization step) is an active-site residue. The active-site For ring-opening step is Asp-141. His-143 (proton acceptor; for ring-opening step) is an active-site residue. Glu-148 acts as the For ring-opening step in catalysis.

The protein belongs to the glucosamine/galactosamine-6-phosphate isomerase family. NagB subfamily. As to quaternary structure, homohexamer.

It catalyses the reaction alpha-D-glucosamine 6-phosphate + H2O = beta-D-fructose 6-phosphate + NH4(+). The protein operates within amino-sugar metabolism; N-acetylneuraminate degradation; D-fructose 6-phosphate from N-acetylneuraminate: step 5/5. With respect to regulation, allosterically activated by N-acetylglucosamine 6-phosphate (GlcNAc6P). Catalyzes the reversible isomerization-deamination of glucosamine 6-phosphate (GlcN6P) to form fructose 6-phosphate (Fru6P) and ammonium ion. The protein is Glucosamine-6-phosphate deaminase of Aeromonas salmonicida (strain A449).